Reading from the N-terminus, the 134-residue chain is Protein Turandot E (134 aa).

An N-terminal signal peptide occupies residues 1–38; that stretch reads MSYTRTIHSSASILKMNSALQISCLLVVLGCLLGSGHC.

This sequence belongs to the Turandot family.

Its subcellular location is the secreted. A humoral factor that may play a role in stress tolerance. The chain is Protein Turandot E from Drosophila sechellia (Fruit fly).